Here is a 234-residue protein sequence, read N- to C-terminus: Small ribosomal subunit protein uS2 (234 aa).

The protein belongs to the universal ribosomal protein uS2 family.

The sequence is that of Small ribosomal subunit protein uS2 from Prochlorococcus marinus (strain MIT 9515).